Reading from the N-terminus, the 467-residue chain is ADP-dependent glucose/glucosamine kinase (467 aa).

Residues 10–467 (RLWKRLYVNA…FVSEFGMRKR (458 aa)) enclose the ADPK domain. D-glucose-binding positions include Asp42, Glu96, Gly120, 120 to 121 (GQ), His184, and Asp211. Position 279 (Glu279) interacts with Mg(2+). Position 305 (Asn305) interacts with ADP. Glu308 contacts Mg(2+). Residues 352–353 (HT), Val440, and Gly450 contribute to the ADP site. Asp451 lines the D-glucose pocket. Residue Asp451 participates in Mg(2+) binding. Asp451 serves as the catalytic Proton acceptor.

Belongs to the ADP-dependent glucokinase family. In terms of assembly, monomer. It depends on Mg(2+) as a cofactor.

The protein resides in the cytoplasm. It catalyses the reaction D-glucose + ADP = D-glucose 6-phosphate + AMP + H(+). The enzyme catalyses D-glucosamine + ADP = D-glucosamine 6-phosphate + AMP + H(+). It functions in the pathway carbohydrate degradation; glycolysis. Functionally, catalyzes the ADP-dependent phosphorylation of D-glucose to D-glucose 6-phosphate and glucosamine to glucosamine 6-phosphate. Can also use CDP as the phosphoryl group donor and D-1,5-anhydroglucitol as the phosphoryl group acceptor. The chain is ADP-dependent glucose/glucosamine kinase from Thermococcus litoralis (strain ATCC 51850 / DSM 5473 / JCM 8560 / NS-C).